The primary structure comprises 262 residues: Merozoite surface protein 2 (262 aa).

Residues 1 to 20 (MKVIKTLSIINFFIFVTFNI) form the signal peptide. Asparagine 22 and asparagine 36 each carry an N-linked (GlcNAc...) asparagine glycan. Residues 44–188 (AESKPPTGTG…EQTESPELQS (145 aa)) are polymorphic region. The disordered stretch occupies residues 44 to 223 (AESKPPTGTG…DSQKECTDGN (180 aa)). Over residues 51 to 66 (GTGGSGSAGSGAGASA) the composition is skewed to gly residues. Positions 67–111 (GNGANPGADAERSPSTPATPATPATTTTTTTTNDAEASTSTSSEN) are enriched in low complexity. The segment covering 112–127 (PNHKNAETNPKGKGEV) has biased composition (basic and acidic residues). Composition is skewed to polar residues over residues 129–155 (KPNQ…NVPP) and 162–190 (KSPT…QSAP). N-linked (GlcNAc...) asparagine glycosylation occurs at asparagine 139. N-linked (GlcNAc...) asparagine glycosylation is present at asparagine 211. A disulfide bridge links cysteine 219 with cysteine 227. 2 N-linked (GlcNAc...) asparagine glycosylation sites follow: asparagine 235 and asparagine 236. Asparagine 236 carries GPI-anchor amidated asparagine lipidation. A propeptide spans 237-262 (SSNIASINKFVVLISATLVLSFAIFI) (removed in mature form).

It localises to the cell membrane. In terms of biological role, may play a role in the merozoite attachment to the erythrocyte. The protein is Merozoite surface protein 2 of Plasmodium falciparum (isolate Camp / Malaysia).